A 580-amino-acid chain; its full sequence is Arginine--tRNA ligase (580 aa).

The 'HIGH' region signature appears at Ala131–His141.

It belongs to the class-I aminoacyl-tRNA synthetase family. In terms of assembly, monomer.

The protein localises to the cytoplasm. The catalysed reaction is tRNA(Arg) + L-arginine + ATP = L-arginyl-tRNA(Arg) + AMP + diphosphate. The sequence is that of Arginine--tRNA ligase from Ruegeria sp. (strain TM1040) (Silicibacter sp.).